Reading from the N-terminus, the 274-residue chain is Large ribosomal subunit protein uL2cz/uL2cy (274 aa).

The interval 225–274 (PVDHPHGGGEGRAPIGRKKPVTPWGYPALGRRSRKRKKYSDNLILRRRTK) is disordered.

The protein belongs to the universal ribosomal protein uL2 family. Part of the 50S ribosomal subunit.

The protein resides in the plastid. It is found in the chloroplast. The polypeptide is Large ribosomal subunit protein uL2cz/uL2cy (rpl2-A) (Lotus japonicus (Lotus corniculatus var. japonicus)).